The sequence spans 156 residues: MPRRRVIGQRKILPDPKFKSELLAKFVNIVMVDGKKSTAEKIVYGALDLMAEKSGKDHLAVFEEALENVRPAVEVKSRRVGGSTYQVPVEVRPVRRNALAMRWMVEAARKRGEKSMAQRLANEMLDASENKGTAVKKREDVHRMADANKAFAHYRW.

Belongs to the universal ribosomal protein uS7 family. Part of the 30S ribosomal subunit. Contacts proteins S9 and S11.

Its function is as follows. One of the primary rRNA binding proteins, it binds directly to 16S rRNA where it nucleates assembly of the head domain of the 30S subunit. Is located at the subunit interface close to the decoding center, probably blocks exit of the E-site tRNA. In Aliivibrio fischeri (strain MJ11) (Vibrio fischeri), this protein is Small ribosomal subunit protein uS7.